Reading from the N-terminus, the 256-residue chain is POU domain class 2-associating factor 1 (256 aa).

The tract at residues 1–23 is disordered; it reads MLWQKPTAPEQAPAPPRPYQGVR. The OCA domain occupies 16-38; it reads PRPYQGVRVKEPVKELLRRKRGH.

It belongs to the POU2AF family. Interacts with POU2F1/OCT1 and POU2F2/OCT2; the interaction increases POU2F1 and POU2F2 transactivation activity. In terms of processing, ubiquitinated; mediated by SIAH1 or SIAH2 and leading to its subsequent proteasomal degradation.

It is found in the nucleus. Functionally, transcriptional coactivator that specifically associates with either POU2F1/OCT1 or POU2F2/OCT2. It boosts the POU2F1/OCT1 mediated promoter activity and to a lesser extent, that of POU2F2/OCT2. It recognizes the POU domains of POU2F1/OCT1 and POU2F2/OCT2. It is essential for the response of B-cells to antigens and required for the formation of germinal centers. Regulates IL6 expression in B cells as POU2F2/OCT2 coactivator. The sequence is that of POU domain class 2-associating factor 1 (POU2AF1) from Bos taurus (Bovine).